We begin with the raw amino-acid sequence, 558 residues long: Phosphatidylserine lipase ABHD16A (558 aa).

2 helical membrane-spanning segments follow: residues 60-80 and 93-113; these read ILALASVFWSISYYSSPFAFF and VVPFSHYAGTLLVLLAGVACL. The Cytoplasmic portion of the chain corresponds to 114-558; it reads RGIGRWTNPQ…AQHFQMPWCL (445 aa). One can recognise an AB hydrolase-1 domain in the interval 281–407; sequence LVICCEGNAG…LVTRTVRQHL (127 aa). Active-site charge relay system residues include serine 355, aspartate 430, and histidine 507.

The protein belongs to the AB hydrolase superfamily. ABHD16 family.

Its subcellular location is the membrane. The enzyme catalyses 1-heptadecanoyl-2-(5Z,8Z,11Z,14Z-eicosatetraenoyl)-sn-glycero-3-phosphoserine + H2O = 1-heptadecanoyl-sn-glycero-3-phosphoserine + (5Z,8Z,11Z,14Z)-eicosatetraenoate + H(+). It catalyses the reaction 1-hexadecanoyl-2-(9Z-octadecenoyl)-sn-glycero-3-phospho-L-serine + H2O = 1-hexadecanoyl-sn-glycero-3-phospho-L-serine + (9Z)-octadecenoate + H(+). It carries out the reaction 1-octadecanoyl-2-(9Z,12Z-octadecadienoyl)-sn-glycero-3-phosphoserine + H2O = 1-octadecanoyl-sn-glycero-3-phosphoserine + (9Z,12Z)-octadecadienoate + H(+). The catalysed reaction is 1-heptadecanoyl-2-(5Z,8Z,11Z,14Z-eicosatetraenoyl)-sn-glycero-3-phosphocholine + H2O = 1-heptadecanoyl-sn-glycero-3-phosphocholine + (5Z,8Z,11Z,14Z)-eicosatetraenoate + H(+). The enzyme catalyses 1-hexadecanoyl-2-(9Z-octadecenoyl)-sn-glycero-3-phosphoglycerol + H2O = 1-hexadecanoyl-sn-glycero-3-phosphoglycerol + (9Z)-octadecenoate + H(+). It catalyses the reaction 1-hexadecanoyl-2-(9Z-octadecenoyl)-sn-glycero-3-phospho-(1D-myo-inositol) + H2O = 1-hexadecanoyl-sn-glycero-3-phospho-(1D-myo-inositol) + (9Z)-octadecenoate + H(+). It carries out the reaction 1-heptadecanoyl-2-(5Z,8Z,11Z,14Z-eicosatetraenoyl)-sn-glycero-3-phosphoethanolamine + H2O = 1-heptadecanoyl-sn-glycero-3-phosphoethanolamine + (5Z,8Z,11Z,14Z)-eicosatetraenoate + H(+). The catalysed reaction is 1-hexadecanoyl-2-(9Z-octadecenoyl)-sn-glycero-3-phospho-(1'-sn-glycerol) + H2O = 1-hexadecanoyl-sn-glycero-3-phospho-(1'-sn-glycerol) + (9Z)-octadecenoate + H(+). The enzyme catalyses Hydrolyzes glycerol monoesters of long-chain fatty acids.. It catalyses the reaction 1-tetradecanoylglycerol + H2O = tetradecanoate + glycerol + H(+). It carries out the reaction 2-hexadecanoylglycerol + H2O = glycerol + hexadecanoate + H(+). The catalysed reaction is 1-(9Z-octadecenoyl)-glycerol + H2O = glycerol + (9Z)-octadecenoate + H(+). The enzyme catalyses 2-(9Z-octadecenoyl)-glycerol + H2O = glycerol + (9Z)-octadecenoate + H(+). It catalyses the reaction 2-(9Z,12Z-octadecadienoyl)-glycerol + H2O = (9Z,12Z)-octadecadienoate + glycerol + H(+). It carries out the reaction 1-(5Z,8Z,11Z,14Z-eicosatetraenoyl)-glycerol + H2O = glycerol + (5Z,8Z,11Z,14Z)-eicosatetraenoate + H(+). The catalysed reaction is 2-(5Z,8Z,11Z,14Z-eicosatetraenoyl)-glycerol + H2O = glycerol + (5Z,8Z,11Z,14Z)-eicosatetraenoate + H(+). The enzyme catalyses prostaglandin D2-1-glycerol ester + H2O = prostaglandin D2 + glycerol + H(+). It catalyses the reaction 2-glyceryl-15-deoxy-Delta(12,14)-prostaglandin J2 + H2O = 15-deoxy-Delta(12,14)-prostaglandin J2 + glycerol + H(+). It carries out the reaction 1-(9Z,12Z-octadecadienoyl)-glycerol + H2O = (9Z,12Z)-octadecadienoate + glycerol + H(+). Functionally, phosphatidylserine (PS) lipase that mediates the hydrolysis of phosphatidylserine to generate lysophosphatidylserine (LPS). LPS constitutes a class of signaling lipids that regulates immunological and neurological processes. Has no activity towards diacylglycerol, triacylglycerol or lysophosphatidylserine lipase. Also has monoacylglycerol lipase activity, with preference for 1-(9Z,12Z-octadecadienoyl)-glycerol (1-LG) and 2-glyceryl-15-deoxy-Delta(12,14)-prostaglandin J2 (15d-PGJ(2)-G). This Rattus norvegicus (Rat) protein is Phosphatidylserine lipase ABHD16A.